Here is a 512-residue protein sequence, read N- to C-terminus: Histidine ammonia-lyase (512 aa).

The segment at residues 146-148 (ASG) is a cross-link (5-imidazolinone (Ala-Gly)). 2,3-didehydroalanine (Ser) is present on Ser147.

The protein belongs to the PAL/histidase family. Contains an active site 4-methylidene-imidazol-5-one (MIO), which is formed autocatalytically by cyclization and dehydration of residues Ala-Ser-Gly.

It is found in the cytoplasm. It carries out the reaction L-histidine = trans-urocanate + NH4(+). It functions in the pathway amino-acid degradation; L-histidine degradation into L-glutamate; N-formimidoyl-L-glutamate from L-histidine: step 1/3. The sequence is that of Histidine ammonia-lyase from Paracidovorax citrulli (strain AAC00-1) (Acidovorax citrulli).